A 380-amino-acid chain; its full sequence is MTTEEDMRSSSSESSPKSFLSLPYDVVFNCLSRVSRTHDPILSLVSKSFRSLLALPDLEAERFRILKNETCLYVCLNLNNNNNPNPSWFILSQTPKHKLIPLPSLPYPDPHPNCSTVVSTGSEIYLLGGFVAKEKRSRRAYVLDCKSHQWRRLPKMRIARKEAAANVIDGKINVYGGCSSEYHNSVNWGEIYDPMTQTWEPFPEGALNKEGVIPCALIKDGIAFPDCGLLISGKVYDTTTMDTLDYNTPMDKLDLCPNVCMLKIDNQDFQASVSDGKLKLVRCRGAMAWHWTVGGLEELSCNYLLSVASPGGGRRVTVWWKTYTKECKTEIWCALILLERELVWGVIEWSENVFTLPGSESDSDSNSFLLHYELVTLARH.

Residues 16–66 enclose the F-box domain; that stretch reads PKSFLSLPYDVVFNCLSRVSRTHDPILSLVSKSFRSLLALPDLEAERFRIL. 2 Kelch repeats span residues 123 to 170 and 172 to 219; these read EIYL…VIDG and INVY…ALIK.

The sequence is that of Putative F-box/kelch-repeat protein At2g44030 from Arabidopsis thaliana (Mouse-ear cress).